A 458-amino-acid polypeptide reads, in one-letter code: Phosphoglucosamine mutase (458 aa).

The active-site Phosphoserine intermediate is serine 106. Residues serine 106, aspartate 247, aspartate 249, and aspartate 251 each coordinate Mg(2+). Serine 106 is subject to Phosphoserine.

The protein belongs to the phosphohexose mutase family. The cofactor is Mg(2+). Post-translationally, activated by phosphorylation.

It carries out the reaction alpha-D-glucosamine 1-phosphate = D-glucosamine 6-phosphate. Catalyzes the conversion of glucosamine-6-phosphate to glucosamine-1-phosphate. This chain is Phosphoglucosamine mutase, found in Chlamydia pneumoniae (Chlamydophila pneumoniae).